The sequence spans 245 residues: Ribonuclease PH (245 aa).

Residues R93 and 131–133 (GTR) each bind phosphate.

This sequence belongs to the RNase PH family. In terms of assembly, homohexameric ring arranged as a trimer of dimers.

The enzyme catalyses tRNA(n+1) + phosphate = tRNA(n) + a ribonucleoside 5'-diphosphate. Functionally, phosphorolytic 3'-5' exoribonuclease that plays an important role in tRNA 3'-end maturation. Removes nucleotide residues following the 3'-CCA terminus of tRNAs; can also add nucleotides to the ends of RNA molecules by using nucleoside diphosphates as substrates, but this may not be physiologically important. Probably plays a role in initiation of 16S rRNA degradation (leading to ribosome degradation) during starvation. The chain is Ribonuclease PH from Corynebacterium glutamicum (strain R).